A 121-amino-acid polypeptide reads, in one-letter code: Small ribosomal subunit protein uS13 (121 aa).

The interval 94–121 is disordered; that stretch reads DLPVRGQRTKTNARTRKGPRKSGVQLKK. Residues 100 to 121 are compositionally biased toward basic residues; the sequence is QRTKTNARTRKGPRKSGVQLKK.

Belongs to the universal ribosomal protein uS13 family. In terms of assembly, part of the 30S ribosomal subunit. Forms a loose heterodimer with protein S19. Forms two bridges to the 50S subunit in the 70S ribosome.

Located at the top of the head of the 30S subunit, it contacts several helices of the 16S rRNA. In the 70S ribosome it contacts the 23S rRNA (bridge B1a) and protein L5 of the 50S subunit (bridge B1b), connecting the 2 subunits; these bridges are implicated in subunit movement. Contacts the tRNAs in the A and P-sites. The chain is Small ribosomal subunit protein uS13 from Polynucleobacter necessarius subsp. necessarius (strain STIR1).